Consider the following 126-residue polypeptide: Small ribosomal subunit protein uS8 (126 aa).

Belongs to the universal ribosomal protein uS8 family. Part of the 30S ribosomal subunit. Contacts proteins S5 and S12.

One of the primary rRNA binding proteins, it binds directly to 16S rRNA central domain where it helps coordinate assembly of the platform of the 30S subunit. This is Small ribosomal subunit protein uS8 from Nitratidesulfovibrio vulgaris (strain ATCC 29579 / DSM 644 / CCUG 34227 / NCIMB 8303 / VKM B-1760 / Hildenborough) (Desulfovibrio vulgaris).